The sequence spans 416 residues: Catalase-peroxidase 2 (416 aa).

Residues 1 to 20 (MLLPLIVFLLSVLIHHRIYS) form the signal peptide.

The protein belongs to the peroxidase family. Peroxidase/catalase subfamily. Homodimer or homotetramer. Heme b is required as a cofactor. In terms of processing, formation of the three residue Trp-Tyr-Met cross-link is important for the catalase, but not the peroxidase activity of the enzyme.

The enzyme catalyses H2O2 + AH2 = A + 2 H2O. It carries out the reaction 2 H2O2 = O2 + 2 H2O. Bifunctional enzyme with both catalase and broad-spectrum peroxidase activity. This chain is Catalase-peroxidase 2 (katG2), found in Alkaliphilus metalliredigens (strain QYMF).